Consider the following 249-residue polypeptide: 2,3-bisphosphoglycerate-dependent phosphoglycerate mutase (249 aa).

Substrate contacts are provided by residues 8–15, 21–22, arginine 60, 87–90, lysine 98, 114–115, and 183–184; these read RHGQSAWN, TG, ERHY, RR, and GN. Histidine 9 (tele-phosphohistidine intermediate) is an active-site residue. Glutamate 87 serves as the catalytic Proton donor/acceptor. Residues 115–137 form a disordered region; that stretch reads RSYDTPPPPLPADDPRSPAGDAR.

Belongs to the phosphoglycerate mutase family. BPG-dependent PGAM subfamily. In terms of assembly, homodimer.

It carries out the reaction (2R)-2-phosphoglycerate = (2R)-3-phosphoglycerate. Its pathway is carbohydrate degradation; glycolysis; pyruvate from D-glyceraldehyde 3-phosphate: step 3/5. In terms of biological role, catalyzes the interconversion of 2-phosphoglycerate and 3-phosphoglycerate. This chain is 2,3-bisphosphoglycerate-dependent phosphoglycerate mutase, found in Nitratidesulfovibrio vulgaris (strain DSM 19637 / Miyazaki F) (Desulfovibrio vulgaris).